Reading from the N-terminus, the 1199-residue chain is Metabotropic glutamate receptor 1 (1199 aa).

An N-terminal signal peptide occupies residues 1 to 18 (MVRLLLIFFPMIFLEMSI). Residues 19–592 (LPRMPDRKVL…VRYLEWSDIE (574 aa)) lie on the Extracellular side of the membrane. A disulfide bond links cysteine 67 and cysteine 109. Residue tyrosine 74 participates in L-glutamate binding. A glycan (N-linked (GlcNAc...) asparagine) is linked at asparagine 98. L-glutamate-binding positions include serine 165 and 186 to 188 (SAT). N-linked (GlcNAc...) asparagine glycosylation occurs at asparagine 223. Residue tyrosine 236 coordinates L-glutamate. The cysteines at positions 289 and 291 are disulfide-linked. Aspartate 318 is a binding site for L-glutamate. Cysteine 378 and cysteine 394 are disulfide-bonded. A glycan (N-linked (GlcNAc...) asparagine) is linked at asparagine 397. Lysine 409 provides a ligand contact to L-glutamate. Cysteine 432 and cysteine 439 form a disulfide bridge. Asparagine 515 carries N-linked (GlcNAc...) asparagine glycosylation. The chain crosses the membrane as a helical span at residues 593–615 (SIIAIAFSCLGILVTLFVTLIFV). Residues 616–629 (LYRDTPVVKSSSRE) lie on the Cytoplasmic side of the membrane. A helical membrane pass occupies residues 630 to 650 (LCYIILAGIFLGYVCPFTLIA). The Extracellular segment spans residues 651–658 (KPTTTSCY). Cysteine 657 and cysteine 746 are joined by a disulfide. Residues 659–680 (LQRLLVGLSSAMCYSALVTKTN) traverse the membrane as a helical segment. Over 681 to 703 (RIARILAGSKKKICTRKPRFMSA) the chain is Cytoplasmic. The chain crosses the membrane as a helical span at residues 704 to 727 (WAQVIIASILISVQLTLVVTLIIM). At 728–750 (EPPMPILSYPSIKEVYLICNTSN) the chain is on the extracellular side. Residues 751 to 772 (LGVVAPVGYNGLLIMSCTYYAF) form a helical membrane-spanning segment. The Cytoplasmic segment spans residues 773–785 (KTRNVPANFNEAK). The chain crosses the membrane as a helical span at residues 786-807 (YIAFTMYTTCIIWLAFVPIYFG). At 808-815 (SNYKIITT) the chain is on the extracellular side. A helical membrane pass occupies residues 816–840 (CFAVSLSVTVALGCMFTPKMYIIIA). Topologically, residues 841-1199 (KPERNVRSAF…RDYKQSSSTL (359 aa)) are cytoplasmic. At serine 853 the chain carries Phosphoserine. Phosphothreonine is present on threonine 871. 3 disordered regions span residues 882–905 (GAGN…QAPK), 959–1036 (EEDN…QPKS), and 1056–1081 (HAVL…PPQH). Positions 885-895 (NANSNGKSVSW) are enriched in polar residues. 2 positions are modified to phosphoserine: serine 894 and serine 969. Residues 1012–1033 (GLPPPLPQQQPQQPPPQQPPQQ) are compositionally biased toward pro residues. Residue serine 1098 is modified to Phosphoserine. Residues 1120–1177 (EREGNTEEDELEEEEDLPTASKLTPEDSPALTPPSPFRDSVASGSSVPSSPVSESVLC) form a disordered region. The segment covering 1125–1136 (TEEDELEEEEDL) has biased composition (acidic residues). The residue at position 1147 (serine 1147) is a Phosphoserine. Threonine 1151 is subject to Phosphothreonine. Phosphoserine is present on serine 1154. Over residues 1159–1175 (SVASGSSVPSSPVSESV) the composition is skewed to low complexity.

The protein belongs to the G-protein coupled receptor 3 family. In terms of assembly, homodimer; disulfide-linked. The PPXXF motif binds HOMER1, HOMER2 and HOMER3. Interacts with TAMALIN. Interacts with RYR1, RYR2, ITPR1, SHANK1 and SHANK3. Interacts with SIAH1. Predominantly expressed in cerebellar Purkinje cells, CA2-CA3 pyramidal cells of the hippocampus, and mitral and tufted cells of the olfactory bulb.

It is found in the cell membrane. The protein resides in the postsynaptic cell membrane. It localises to the cell projection. Its subcellular location is the dendrite. G-protein coupled receptor for glutamate. Ligand binding causes a conformation change that triggers signaling via guanine nucleotide-binding proteins (G proteins) and modulates the activity of down-stream effectors. Signaling activates a phosphatidylinositol-calcium second messenger system. May participate in the central action of glutamate in the CNS, such as long-term potentiation in the hippocampus and long-term depression in the cerebellum. May function in the light response in the retina. Induces GRID1 and GRID2 cation-channel activation via GNAQ-PLC-PKC pathway in dopaminergic neurons and cerebellar Purkinje cell, respectively. In Rattus norvegicus (Rat), this protein is Metabotropic glutamate receptor 1 (Grm1).